Consider the following 233-residue polypeptide: Orotidine 5'-phosphate decarboxylase (233 aa).

Substrate is bound by residues Asp-13, Lys-35, 62 to 71 (DLKFHDIPNT), Thr-122, Arg-182, Gln-191, Gly-211, and Arg-212. The Proton donor role is filled by Lys-64.

The protein belongs to the OMP decarboxylase family. Type 1 subfamily. Homodimer.

The catalysed reaction is orotidine 5'-phosphate + H(+) = UMP + CO2. Its pathway is pyrimidine metabolism; UMP biosynthesis via de novo pathway; UMP from orotate: step 2/2. Its function is as follows. Catalyzes the decarboxylation of orotidine 5'-monophosphate (OMP) to uridine 5'-monophosphate (UMP). The sequence is that of Orotidine 5'-phosphate decarboxylase from Pseudomonas entomophila (strain L48).